Here is a 212-residue protein sequence, read N- to C-terminus: Kynurenine formamidase (212 aa).

Tryptophan 18 contacts substrate. Zn(2+) contacts are provided by histidine 48, histidine 52, and aspartate 54. The Proton donor/acceptor role is filled by histidine 58. Residues histidine 160 and glutamate 172 each contribute to the Zn(2+) site.

It belongs to the Cyclase 1 superfamily. KynB family. In terms of assembly, homodimer. Zn(2+) serves as cofactor.

It carries out the reaction N-formyl-L-kynurenine + H2O = L-kynurenine + formate + H(+). It functions in the pathway amino-acid degradation; L-tryptophan degradation via kynurenine pathway; L-kynurenine from L-tryptophan: step 2/2. Catalyzes the hydrolysis of N-formyl-L-kynurenine to L-kynurenine, the second step in the kynurenine pathway of tryptophan degradation. This chain is Kynurenine formamidase, found in Paraburkholderia xenovorans (strain LB400).